The following is a 153-amino-acid chain: Nucleoside diphosphate kinase (153 aa).

Lys13, Phe61, Arg89, Thr95, Arg106, and Asn116 together coordinate ATP. His119 acts as the Pros-phosphohistidine intermediate in catalysis.

The protein belongs to the NDK family. Requires Mg(2+) as cofactor. Highest levels in the liver and kidney with lower levels in the heart, brain and breast muscle.

Its subcellular location is the cytoplasm. It localises to the cell membrane. It carries out the reaction a 2'-deoxyribonucleoside 5'-diphosphate + ATP = a 2'-deoxyribonucleoside 5'-triphosphate + ADP. The enzyme catalyses a ribonucleoside 5'-diphosphate + ATP = a ribonucleoside 5'-triphosphate + ADP. In terms of biological role, major role in the synthesis of nucleoside triphosphates other than ATP. The ATP gamma phosphate is transferred to the NDP beta phosphate via a ping-pong mechanism, using a phosphorylated active-site intermediate. This Columba livia (Rock dove) protein is Nucleoside diphosphate kinase.